A 730-amino-acid chain; its full sequence is Protein groucho (730 aa).

Positions 144–411 (QVPGGPPQPM…GKPAYSFHMN (268 aa)) are disordered. Basic and acidic residues predominate over residues 198–233 (AEERLRNSVSPADREKYRTRSPLDIENDSKRRKDEK). S205, S207, and S218 each carry phosphoserine. The tract at residues 206-267 (VSPADREKYR…SPRPNGEHVS (62 aa)) is CCN domain. The Nuclear localization signal motif lies at 227–230 (KRRK). S242 carries the phosphoserine; by CK2 modification. Residues 254–283 (MESHSPRPNGEHVSMEVRDRESLNGERLEK) show a composition bias toward basic and acidic residues. S258 bears the Phosphoserine; by CDC2 mark. The interval 262–425 (NGEHVSMEVR…LQPVPFPPDA (164 aa)) is binding to basic helix-loop-helix domain. S267 carries the post-translational modification Phosphoserine. 3 stretches are compositionally biased toward low complexity: residues 296 to 308 (SRSG…STPS), 322 to 345 (AKAR…QMMP), and 353 to 362 (YPGAPYQRPA). T326 and T328 each carry phosphothreonine. A compositionally biased stretch (pro residues) spans 366–382 (QRPPSDPAYGRPPPMPY). 7 WD repeats span residues 442–480 (SHGE…NKNP), 488–527 (QRDN…PRIK), 532–571 (SAAP…LVRQ), 574–613 (GHTD…QLQQ), 615–654 (DFSS…KYQL), 656–695 (LHES…SIFQ), and 697–730 (KETS…EVIY).

This sequence belongs to the WD repeat Groucho/TLE family. As to quaternary structure, forms a complex with the hairy/Enhancer of split/deadpan family of basic helix-loop-helix proteins in order to repress transcription. Its activity in regulating transcription depends on other proteins as it lacks a DNA-binding motif. Interacts with hairy/hry (via WRPW motif). Post-translationally, ubiquitinated by XIAP/BIRC4. Ubiquitinated by hyd in response to Wnt signaling, leading to degradation by the proteasome.

The protein resides in the nucleus. In terms of biological role, transcriptional corepressor that regulates transcription when recruited to specific target DNA by hairy-related bHLH proteins. Maternally required for neurogenesis; in the segregation of the neuroectoderm. Directly or indirectly interacts with Notch and Delta. This is Protein groucho (gro) from Drosophila melanogaster (Fruit fly).